Here is a 435-residue protein sequence, read N- to C-terminus: Methylenetetrahydrofolate--tRNA-(uracil-5-)-methyltransferase TrmFO (435 aa).

FAD is bound at residue 9 to 14; the sequence is GAGLAG.

Belongs to the MnmG family. TrmFO subfamily. Requires FAD as cofactor.

The protein resides in the cytoplasm. The catalysed reaction is uridine(54) in tRNA + (6R)-5,10-methylene-5,6,7,8-tetrahydrofolate + NADH + H(+) = 5-methyluridine(54) in tRNA + (6S)-5,6,7,8-tetrahydrofolate + NAD(+). It catalyses the reaction uridine(54) in tRNA + (6R)-5,10-methylene-5,6,7,8-tetrahydrofolate + NADPH + H(+) = 5-methyluridine(54) in tRNA + (6S)-5,6,7,8-tetrahydrofolate + NADP(+). Catalyzes the folate-dependent formation of 5-methyl-uridine at position 54 (M-5-U54) in all tRNAs. The sequence is that of Methylenetetrahydrofolate--tRNA-(uracil-5-)-methyltransferase TrmFO from Staphylococcus saprophyticus subsp. saprophyticus (strain ATCC 15305 / DSM 20229 / NCIMB 8711 / NCTC 7292 / S-41).